Here is a 101-residue protein sequence, read N- to C-terminus: Small ribosomal subunit protein bS18c (101 aa).

It belongs to the bacterial ribosomal protein bS18 family. In terms of assembly, part of the 30S ribosomal subunit.

It localises to the plastid. It is found in the chloroplast. This is Small ribosomal subunit protein bS18c from Solanum bulbocastanum (Wild potato).